Consider the following 371-residue polypeptide: Opsin, ultraviolet-sensitive (371 aa).

Over 1 to 52 (MSNDSIHWEARYLPAGPPRLLGWNVPAEELIHIPEHWLVYPEPNPSLHYLLA) the chain is Extracellular. A glycan (N-linked (GlcNAc...) asparagine) is linked at Asn3. Residues 53 to 73 (LLYILFTFLALLGNGLVIWIF) traverse the membrane as a helical segment. The Cytoplasmic segment spans residues 74–84 (CAAKSLRTPSN). A helical membrane pass occupies residues 85–105 (MFVVNLAICDFFMMIKTPIFI). Residues 106–121 (YNSFNTGFALGNLGCQ) lie on the Extracellular side of the membrane. A disulfide bond links Cys120 and Cys197. A helical membrane pass occupies residues 122–142 (IFAVIGSLTGIGAAITNAAIA). Topologically, residues 143–161 (YDRYSTIARPLDGKLSRGQ) are cytoplasmic. Residues 162–182 (VILFIVLIWTYTIPWALMPVM) form a helical membrane-spanning segment. Residues 183-209 (GVWGRFVPEGFLTSCSFDYLTDTNEIR) lie on the Extracellular side of the membrane. Residues 210-230 (IFVATIFTFSYCIPMILIIYY) form a helical membrane-spanning segment. Residues 231–278 (YSQIVSHVVNHEKALREQAKKMNVDSLRSNANTSSQSAEIRIAKAAIT) lie on the Cytoplasmic side of the membrane. Residues 279–299 (ICFLYVLSWTPYGVMSMIGAF) form a helical membrane-spanning segment. The Extracellular portion of the chain corresponds to 300 to 302 (GNK). Residues 303 to 323 (ALLTPGVTMIPACTCKAVACL) form a helical membrane-spanning segment. Position 318 is an N6-(retinylidene)lysine (Lys318). The Cytoplasmic portion of the chain corresponds to 324-371 (DPYVYAISHPKYRLELQKRLPWLELQEKPISDSTSTTTETVNTPPASS).

Belongs to the G-protein coupled receptor 1 family. Opsin subfamily. In terms of processing, phosphorylated on some or all of the serine and threonine residues present in the C-terminal region. In terms of tissue distribution, expressed in the dorsal region of the retina.

Its subcellular location is the membrane. Visual pigments are the light-absorbing molecules that mediate vision. They consist of an apoprotein, opsin, covalently linked to 11-cis-retinal. The polypeptide is Opsin, ultraviolet-sensitive (UVOP) (Apis mellifera (Honeybee)).